The sequence spans 432 residues: Trigger factor (432 aa).

Residues glutamate 161–proline 246 form the PPIase FKBP-type domain.

This sequence belongs to the FKBP-type PPIase family. Tig subfamily.

It is found in the cytoplasm. It catalyses the reaction [protein]-peptidylproline (omega=180) = [protein]-peptidylproline (omega=0). Its function is as follows. Involved in protein export. Acts as a chaperone by maintaining the newly synthesized protein in an open conformation. Functions as a peptidyl-prolyl cis-trans isomerase. The chain is Trigger factor from Klebsiella pneumoniae (strain 342).